The sequence spans 280 residues: Putative S-adenosyl-L-methionine-dependent methyltransferase FRAAL3836 (280 aa).

S-adenosyl-L-methionine contacts are provided by residues Asp121 and 150-151 (DL).

It belongs to the UPF0677 family.

In terms of biological role, exhibits S-adenosyl-L-methionine-dependent methyltransferase activity. In Frankia alni (strain DSM 45986 / CECT 9034 / ACN14a), this protein is Putative S-adenosyl-L-methionine-dependent methyltransferase FRAAL3836.